We begin with the raw amino-acid sequence, 288 residues long: Protease HtpX (288 aa).

The next 2 helical transmembrane spans lie at 5 to 25 (IALFLATNFAVLILASIVMSL) and 35 to 55 (GLLVMAAIFGFGGSFISLLLS). Histidine 140 is a binding site for Zn(2+). Residue glutamate 141 is part of the active site. Histidine 144 is a binding site for Zn(2+). 2 consecutive transmembrane segments (helical) span residues 155 to 175 (LLQGVLNTFVIVLARVVGGII) and 194 to 214 (IIVFVLEMVFGLFATMISMWF). Residue glutamate 219 participates in Zn(2+) binding.

Belongs to the peptidase M48B family. Requires Zn(2+) as cofactor.

It is found in the cell inner membrane. The protein is Protease HtpX of Stenotrophomonas maltophilia (strain K279a).